A 159-amino-acid polypeptide reads, in one-letter code: MNIKIVCVGKLKEKYFKDGIAEYQKRLSRFAKVEIVQVPDEKAPESLSPAQMEEVKKREGERILSKIKDKEYVYVLAIKGKERASEEFAKELKNLGTYGHSDITFVIGGSLGTSDAVNKRANDLFSFGKLTMPHQLMRLVLIEQIYRAFMINSGSPYHK.

S-adenosyl-L-methionine-binding positions include Leu76, Gly108, and 127–132; that span reads FGKLTM.

This sequence belongs to the RNA methyltransferase RlmH family. As to quaternary structure, homodimer.

The protein localises to the cytoplasm. It carries out the reaction pseudouridine(1915) in 23S rRNA + S-adenosyl-L-methionine = N(3)-methylpseudouridine(1915) in 23S rRNA + S-adenosyl-L-homocysteine + H(+). Its function is as follows. Specifically methylates the pseudouridine at position 1915 (m3Psi1915) in 23S rRNA. This Lactobacillus delbrueckii subsp. bulgaricus (strain ATCC 11842 / DSM 20081 / BCRC 10696 / JCM 1002 / NBRC 13953 / NCIMB 11778 / NCTC 12712 / WDCM 00102 / Lb 14) protein is Ribosomal RNA large subunit methyltransferase H.